The sequence spans 598 residues: Serine/threonine-protein kinase cot-1 (598 aa).

Composition is skewed to polar residues over residues 1-16, 24-33, and 99-126; these read MDNT…TNDT, TYPTTPSTFP, and PRTS…TQTE. Disordered regions lie at residues 1 to 46, 80 to 148, and 163 to 190; these read MDNT…GGSQ, GSAG…NQKK, and RARE…RESI. A Protein kinase domain is found at 214-518; it reads YQTIKIIGKG…AHEIKSHAFF (305 aa). ATP is bound by residues 220 to 228 and Lys-243; that span reads IGKGAFGEV. Asp-337 (proton acceptor) is an active-site residue. Positions 519–598 constitute an AGC-kinase C-terminal domain; it reads RGVEFDSLRR…TFKRFDNNFR (80 aa).

It belongs to the protein kinase superfamily. STE Ser/Thr protein kinase family. COT1 subfamily.

It carries out the reaction L-seryl-[protein] + ATP = O-phospho-L-seryl-[protein] + ADP + H(+). The catalysed reaction is L-threonyl-[protein] + ATP = O-phospho-L-threonyl-[protein] + ADP + H(+). In terms of biological role, protein kinase required for hyphal elongation. The chain is Serine/threonine-protein kinase cot-1 (cot-1) from Neurospora crassa (strain ATCC 24698 / 74-OR23-1A / CBS 708.71 / DSM 1257 / FGSC 987).